We begin with the raw amino-acid sequence, 268 residues long: Minor capsid protein VP2 (268 aa).

Over residues 132–144 the composition is skewed to polar residues; that stretch reads STPQSLGALTGRT. The interval 132–199 is disordered; that stretch reads STPQSLGALT…SLSSAARTRS (68 aa). Low complexity predominate over residues 145-163; the sequence is NSRVSAPARSSPSALSNAP. The span at 164–178 shows a compositional bias: polar residues; it reads TATSLHSNQTVSTRL. Positions 179-195 are enriched in low complexity; that stretch reads GSSAGSGTGVSSLSSAA.

It belongs to the norovirus VP2 family. Homooligomer. The portal-like structure consists in 12 copies of VP2. Interacts with capsid protein VP1.

It localises to the virion. The protein resides in the host cytoplasm. In terms of biological role, minor structural protein that forms a portal-like structure at a unique three-fold axis of symmetry, following binding to the host receptor. The channel formed by VP2 may allow the delivery of the viral genome through the host endosomal membrane. The polypeptide is Minor capsid protein VP2 (Lordsdale virus (strain GII/Human/United Kingdom/Lordsdale/1993) (Human enteric calicivirus)).